Here is a 425-residue protein sequence, read N- to C-terminus: MATVIKNGTVYQNGRLIKADVLIEGKKIKAIGTDLDAEKIIDAQGMLVSPGLVDVHVHYRDPGQTYKEDIKTGSEAAARGGFTTVGAMPNVTPVPNTPELMKKMVEENKHKGVVHIFQYGPITNDETTDIIPDYAALKKAGAFALSNDGHGVQTAQTMYLAMQKAKENNLIIATHAQDDSLFNKGIVNEGVAAKKLDLPPVTELAETTQIARDLLLAQKTGVHYHICHVSTKTSVELVRLAKARGINVTCEVAPHHILLTDSDIPKDNGYFKMNPPLRNKEDQAALLVGLLDGTIDLIATDHAPHAKSEKQGGMKNAAFGITGSETAFSTLYTKFVKEEKVLSLEQLLALLSDKPAKVFGIENAGVLEPGKNADVAIFDIEHKNEIKEADFKSKGVNTPFTGQKVYGETVMTLVDGEVVYQRGTK.

2 residues coordinate Zn(2+): H56 and H58. Substrate contacts are provided by residues 58 to 60 (HYR) and N90. Positions 148, 175, and 228 each coordinate Zn(2+). Position 274 (N274) interacts with substrate. D301 provides a ligand contact to Zn(2+). The active site involves D301. Substrate is bound by residues H305 and 319–320 (FG).

The protein belongs to the metallo-dependent hydrolases superfamily. DHOase family. Class I DHOase subfamily. The cofactor is Zn(2+).

It catalyses the reaction (S)-dihydroorotate + H2O = N-carbamoyl-L-aspartate + H(+). It functions in the pathway pyrimidine metabolism; UMP biosynthesis via de novo pathway; (S)-dihydroorotate from bicarbonate: step 3/3. Functionally, catalyzes the reversible cyclization of carbamoyl aspartate to dihydroorotate. This Lactobacillus gasseri (strain ATCC 33323 / DSM 20243 / BCRC 14619 / CIP 102991 / JCM 1131 / KCTC 3163 / NCIMB 11718 / NCTC 13722 / AM63) protein is Dihydroorotase.